Reading from the N-terminus, the 476-residue chain is Calcium/calmodulin-dependent protein kinase type 1G (476 aa).

In terms of domain architecture, Protein kinase spans Phe23 to Ile277. ATP is bound by residues Leu29–Val37 and Lys52. Catalysis depends on Asp143, which acts as the Proton acceptor. Residues Ile277–Met317 form an autoinhibitory domain region. The segment at Lys297–Arg318 is calmodulin-binding. Residues His325 to Glu352 are disordered. Positions Pro338–Glu352 are enriched in polar residues.

Belongs to the protein kinase superfamily. CAMK Ser/Thr protein kinase family. CaMK subfamily. May be prenylated on Cys-473. As to expression, mainly expressed in brain with small amounts in skeletal muscles, kidney, spleen and liver. Strongly expressed in forebrain neocortex, striatum and limbic system.

It localises to the cytoplasm. The protein resides in the golgi apparatus membrane. Its subcellular location is the cell membrane. The enzyme catalyses L-seryl-[protein] + ATP = O-phospho-L-seryl-[protein] + ADP + H(+). The catalysed reaction is L-threonyl-[protein] + ATP = O-phospho-L-threonyl-[protein] + ADP + H(+). With respect to regulation, activated by Ca(2+)/calmodulin. Binding of calmodulin is thought to result in a conformational change and leads to activation through phosphorylation by CAMKK1. Functionally, calcium/calmodulin-dependent protein kinase belonging to a proposed calcium-triggered signaling cascade. In vitro phosphorylates transcription factor CREB1. The chain is Calcium/calmodulin-dependent protein kinase type 1G (CAMK1G) from Homo sapiens (Human).